The following is an 87-amino-acid chain: MQSSIIEITNIKKKIVYQTQITLLLVLELNNIHLEYQCRSGYCGICRIELIKGEVFYLIKQPMAALFKEREIFPCCCKPKGNITIKI.

The 2Fe-2S ferredoxin-type domain maps to Ser-4–Ile-87. The [2Fe-2S] cluster site is built by Cys-38, Cys-43, Cys-46, and Cys-75.

Requires [2Fe-2S] cluster as cofactor.

This is an uncharacterized protein from Buchnera aphidicola subsp. Acyrthosiphon pisum (strain APS) (Acyrthosiphon pisum symbiotic bacterium).